Here is a 118-residue protein sequence, read N- to C-terminus: Large ribosomal subunit protein bL20 (118 aa).

This sequence belongs to the bacterial ribosomal protein bL20 family.

Functionally, binds directly to 23S ribosomal RNA and is necessary for the in vitro assembly process of the 50S ribosomal subunit. It is not involved in the protein synthesizing functions of that subunit. The sequence is that of Large ribosomal subunit protein bL20 from Pectobacterium atrosepticum (strain SCRI 1043 / ATCC BAA-672) (Erwinia carotovora subsp. atroseptica).